The following is a 152-amino-acid chain: Glutamyl-tRNA(Gln) amidotransferase subunit F, mitochondrial (152 aa).

This sequence belongs to the GatF family. Subunit of the heterotrimeric GatFAB amidotransferase (AdT) complex, composed of A, B and F subunits.

The protein resides in the mitochondrion inner membrane. It carries out the reaction L-glutamyl-tRNA(Gln) + L-glutamine + ATP + H2O = L-glutaminyl-tRNA(Gln) + L-glutamate + ADP + phosphate + H(+). Its function is as follows. Allows the formation of correctly charged Gln-tRNA(Gln) through the transamidation of misacylated Glu-tRNA(Gln) in the mitochondria. The reaction takes place in the presence of glutamine and ATP through an activated gamma-phospho-Glu-tRNA(Gln). Required for proper protein synthesis within the mitochondrion. The chain is Glutamyl-tRNA(Gln) amidotransferase subunit F, mitochondrial from Komagataella phaffii (strain GS115 / ATCC 20864) (Yeast).